Reading from the N-terminus, the 240-residue chain is UDP-2,3-diacylglucosamine hydrolase (240 aa).

5 residues coordinate Mn(2+): Asp8, His10, Asp41, Asn79, and His114. Position 79–80 (79–80) interacts with substrate; that stretch reads NR. Residues Asp122, Ser160, Asn164, Lys167, and His195 each contribute to the substrate site. Positions 195 and 197 each coordinate Mn(2+).

The protein belongs to the LpxH family. The cofactor is Mn(2+).

The protein resides in the cell inner membrane. It carries out the reaction UDP-2-N,3-O-bis[(3R)-3-hydroxytetradecanoyl]-alpha-D-glucosamine + H2O = 2-N,3-O-bis[(3R)-3-hydroxytetradecanoyl]-alpha-D-glucosaminyl 1-phosphate + UMP + 2 H(+). It participates in glycolipid biosynthesis; lipid IV(A) biosynthesis; lipid IV(A) from (3R)-3-hydroxytetradecanoyl-[acyl-carrier-protein] and UDP-N-acetyl-alpha-D-glucosamine: step 4/6. Its function is as follows. Hydrolyzes the pyrophosphate bond of UDP-2,3-diacylglucosamine to yield 2,3-diacylglucosamine 1-phosphate (lipid X) and UMP by catalyzing the attack of water at the alpha-P atom. Involved in the biosynthesis of lipid A, a phosphorylated glycolipid that anchors the lipopolysaccharide to the outer membrane of the cell. The polypeptide is UDP-2,3-diacylglucosamine hydrolase (Klebsiella pneumoniae subsp. pneumoniae (strain ATCC 700721 / MGH 78578)).